The sequence spans 236 residues: Small ribosomal subunit protein uS2c (236 aa).

The protein belongs to the universal ribosomal protein uS2 family.

It localises to the plastid. The protein resides in the chloroplast. In Nandina domestica (Heavenly bamboo), this protein is Small ribosomal subunit protein uS2c (rps2).